Consider the following 478-residue polypeptide: Cytochrome c-552 (478 aa).

A signal peptide spans 1–26 (MARKTLRARRFFSLIFPFFFITSVYA). His-94 serves as a coordination point for heme c. Heme-binding residues include Cys-122, Cys-125, and Lys-126. 6 residues coordinate heme c: Cys-160, Cys-163, His-164, Cys-209, Cys-212, and His-213. 4 residues coordinate Ca(2+): Glu-215, Tyr-216, Lys-261, and Gln-263. A substrate-binding site is contributed by Tyr-216. His-264 is a binding site for substrate. Heme c contacts are provided by His-275, Cys-282, Cys-285, His-286, His-301, Cys-314, Cys-317, His-318, and His-393.

Belongs to the cytochrome c-552 family. The cofactor is Ca(2+). Heme c is required as a cofactor.

The protein localises to the periplasm. It carries out the reaction 6 Fe(III)-[cytochrome c] + NH4(+) + 2 H2O = 6 Fe(II)-[cytochrome c] + nitrite + 8 H(+). It functions in the pathway nitrogen metabolism; nitrate reduction (assimilation). Catalyzes the reduction of nitrite to ammonia, consuming six electrons in the process. This Salmonella typhi protein is Cytochrome c-552.